Consider the following 236-residue polypeptide: UPF0257 lipoprotein YnfC (236 aa).

The signal sequence occupies residues 1–16 (MKYKLLPCLLAILLTG). Residue cysteine 17 is the site of N-palmitoyl cysteine attachment. Residue cysteine 17 is the site of S-diacylglycerol cysteine attachment.

It belongs to the UPF0257 family.

It localises to the cell membrane. The protein is UPF0257 lipoprotein YnfC of Escherichia coli O127:H6 (strain E2348/69 / EPEC).